Here is a 438-residue protein sequence, read N- to C-terminus: 23S rRNA (uracil(1939)-C(5))-methyltransferase RlmD (438 aa).

The TRAM domain occupies 13–71 (KAPLGPMQTYLVEGLTHEAKGVARLNGKVTFIEGALPGETVTAQVNKPGRRFDEAVLNA). Positions 84, 90, 93, and 167 each coordinate [4Fe-4S] cluster. S-adenosyl-L-methionine-binding residues include Gln271, Phe300, Asn305, Glu321, Asp348, and Asp368. Residue Cys394 is the Nucleophile of the active site.

The protein belongs to the class I-like SAM-binding methyltransferase superfamily. RNA M5U methyltransferase family. RlmD subfamily.

The enzyme catalyses uridine(1939) in 23S rRNA + S-adenosyl-L-methionine = 5-methyluridine(1939) in 23S rRNA + S-adenosyl-L-homocysteine + H(+). Its function is as follows. Catalyzes the formation of 5-methyl-uridine at position 1939 (m5U1939) in 23S rRNA. The chain is 23S rRNA (uracil(1939)-C(5))-methyltransferase RlmD from Marinomonas posidonica (strain CECT 7376 / NCIMB 14433 / IVIA-Po-181).